Consider the following 371-residue polypeptide: Glyco-Gag protein (371 aa).

Over 1–51 the chain is Cytoplasmic; it reads MSGASSGTAIGAHLFGVSPEYRVLIGDEGAGPSKSLSEVSFSVWYRSRAAR. Residues 52 to 72 traverse the membrane as a helical segment; the sequence is LVILCLVASFLVPCLTFLIAE. Over 73 to 371 the chain is Extracellular; that stretch reads AVMGQTVTTP…NVIDETFPLT (299 aa). A glycan (N-linked (GlcNAc...) asparagine; by host) is linked at asparagine 134. 2 disordered regions span residues 171–281 and 350–371; these read VRPF…NNRP and VPGEDGRPTQLPNVIDETFPLT. Residues 174-193 show a composition bias toward pro residues; the sequence is FLPPPKPPTPLPQPLSPQPS. Residues 194–203 are compositionally biased toward low complexity; that stretch reads APLTSSLYPV. 2 stretches are compositionally biased toward pro residues: residues 204–220 and 230–245; these read VPKPDPPKPPVLPPDPS and EPPPYPGGHGPPPSGP.

In terms of processing, glycosylated by host. Cleaved by host near the middle of the molecule, releasing the c-terminal half containing capsid and nucleoprotein domains op GAG.

It is found in the host cell membrane. Functionally, plays a role in viral particle release. Presumably acts by facilitating the fission of the virion bud at the cell surface. The protein is Glyco-Gag protein of Feline sarcoma virus (strain Snyder-Theilen).